Consider the following 782-residue polypeptide: Protein phosphatase 1 regulatory subunit 12C (782 aa).

2 stretches are compositionally biased toward low complexity: residues 1–19 and 77–88; these read MSGE…AAAA and DPGPGSGAASDP. 2 disordered regions span residues 1 to 45 and 77 to 98; these read MSGE…GERR and DPGP…RAVL. S2 is subject to N-acetylserine. ANK repeat units follow at residues 104-133, 137-166, 230-259, and 263-292; these read DGIS…TVNQ, EGWT…NIAA, TGAS…DTEL, and DGWT…GMDS. Residues 301-332 are a coiled coil; the sequence is CDLADEDVMNLLEELAQKQEDLRNQKEGSQGR. The interval 321–685 is disordered; sequence DLRNQKEGSQ…HEEPDGGFRK (365 aa). The segment covering 332–341 has biased composition (polar residues); the sequence is RGQESQVPSS. Residues 353–369 show a composition bias toward basic and acidic residues; sequence SSREKISLQDLSKERRP. Residues 401–413 show a composition bias toward low complexity; that stretch reads VSSPVSSNPKSPV. Phosphoserine is present on residues S403, S411, S431, S454, and S509. The span at 451–465 shows a compositional bias: polar residues; that stretch reads RSASSSLLEKASTQA. A compositionally biased stretch (basic and acidic residues) spans 537 to 546; sequence VRDEESESQR. Over residues 547 to 557 the composition is skewed to basic residues; it reads KARSRLMRQSR. Residue T560 is modified to Phosphothreonine. S647 carries the post-translational modification Phosphoserine. Over residues 664–685 the composition is skewed to basic and acidic residues; it reads SQRDLVLESKQEHEEPDGGFRK. The stretch at 681-782 forms a coiled coil; that stretch reads GGFRKMYTEL…LIRVISKLSK (102 aa).

As to quaternary structure, PP1 comprises a catalytic subunit, PPP1CA, PPP1CB or PPP1CC, and one or several targeting or regulatory subunits. PPP1R12C mediates binding to myosin. Interacts via its N-terminus with PPP1CB. Interacts with IL16. Interacts with the coiled-coil domain of MPRIP. Interacts with NOD2. In terms of processing, phosphorylation at Thr-560 is essential for its interaction with PPP1CB.

It localises to the cytoplasm. It is found in the cytoskeleton. The protein localises to the stress fiber. Functionally, regulates myosin phosphatase activity. In Mus musculus (Mouse), this protein is Protein phosphatase 1 regulatory subunit 12C.